A 484-amino-acid chain; its full sequence is Ribonuclease Y (484 aa).

Residues 18–38 (FFAFLFLIIIAFNLCLFAYLY) traverse the membrane as a helical segment. Residues 166-234 (SPSFLISESD…LTVRNILMND (69 aa)) enclose the KH domain. Residues 293–385 (VLSHSLETAF…TQIADKLSAA (93 aa)) form the HD domain.

This sequence belongs to the RNase Y family.

It localises to the cell membrane. In terms of biological role, endoribonuclease that initiates mRNA decay. The chain is Ribonuclease Y from Mycoplasma genitalium (strain ATCC 33530 / DSM 19775 / NCTC 10195 / G37) (Mycoplasmoides genitalium).